A 497-amino-acid polypeptide reads, in one-letter code: Virion host shutoff protein (497 aa).

2 disordered regions span residues 122-142 and 280-373; these read EHDT…PPQD and SVIS…SAEA. Residues 309-326 show a composition bias toward basic and acidic residues; sequence PNERRVISWRRQDDHDYD. The span at 327–344 shows a compositional bias: acidic residues; sequence SSTEDSDQSDSSEEEEEC.

Belongs to the herpesviridae VHS protein family.

Its subcellular location is the virion. Functionally, minor structural protein that acts as an endoribonuclease during lytic infection. Degrades host mRNAs in the cytoplasm by cutting them at preferred sites, including some in regions of translation initiation. The polypeptide is Virion host shutoff protein (Equine herpesvirus 1 (strain Ab4p) (EHV-1)).